Here is an 833-residue protein sequence, read N- to C-terminus: Leucine--tRNA ligase (833 aa).

The 'HIGH' region signature appears at 41 to 52; the sequence is PYPSGAGLHVGH. The 'KMSKS' region signature appears at 610–614; it reads KMSKS. Lysine 613 serves as a coordination point for ATP.

This sequence belongs to the class-I aminoacyl-tRNA synthetase family.

Its subcellular location is the cytoplasm. It carries out the reaction tRNA(Leu) + L-leucine + ATP = L-leucyl-tRNA(Leu) + AMP + diphosphate. This chain is Leucine--tRNA ligase, found in Streptococcus sanguinis (strain SK36).